Reading from the N-terminus, the 786-residue chain is Cadherin-9 (786 aa).

An N-terminal signal peptide occupies residues 1-21 (MRTYSCLQLVIWTCIFHMVDN). Asparagine 21 carries an N-linked (GlcNAc...) asparagine glycan. The propeptide occupies 22–52 (STLQGKDSSHFLRRIVNLKKDEGKMLHRAKR). At 22 to 614 (STLQGKDSSH…MLAAGLSTGA (593 aa)) the chain is on the extracellular side. Cadherin domains are found at residues 54–158 (WMWN…EPKF), 159–267 (TKDL…PPRF), 268–382 (PQST…PPVF), 383–487 (SKLS…APEF), and 487–604 (FATY…AEAL). N-linked (GlcNAc...) asparagine glycosylation is present at asparagine 254. Asparagine 454 and asparagine 535 each carry an N-linked (GlcNAc...) asparagine glycan. The chain crosses the membrane as a helical span at residues 615–635 (LIAILLCVVILLTLIVLFAAL). At 636–786 (KRQRKKEPLI…AEMYGGNDSD (151 aa)) the chain is on the cytoplasmic side. Residue serine 785 is modified to Phosphoserine.

It is found in the cell membrane. Functionally, cadherins are calcium-dependent cell adhesion proteins. They preferentially interact with themselves in a homophilic manner in connecting cells; cadherins may thus contribute to the sorting of heterogeneous cell types. The sequence is that of Cadherin-9 (Cdh9) from Mus musculus (Mouse).